The following is a 457-amino-acid chain: Elongation factor 1-alpha (457 aa).

Gly2 is modified (n,N,N-trimethylglycine). Lys3 carries the post-translational modification N6,N6-dimethyllysine; alternate. At Lys3 the chain carries N6-methyllysine; alternate. The region spanning 5 to 240 is the tr-type G domain; it reads KTHVNVVVIG…DAIEPPVRPS (236 aa). The G1 stretch occupies residues 14 to 21; the sequence is GHVDSGKS. 14–21 contributes to the GTP binding site; that stretch reads GHVDSGKS. Lys30 carries the N6-methyllysine modification. Residues 70-74 form a G2 region; that stretch reads GITID. Lys79 carries the N6,N6,N6-trimethyllysine modification. A G3 region spans residues 91–94; the sequence is DAPG. Residues 91 to 95 and 153 to 156 each bind GTP; these read DAPGH and NKMD. Positions 153–156 are G4; sequence NKMD. The G5 stretch occupies residues 192–194; that stretch reads SGW. Position 316 is an N6,N6-dimethyllysine; alternate (Lys316). Lys316 is subject to N6-methyllysine; alternate. Lys389 is modified (N6-methyllysine).

It belongs to the TRAFAC class translation factor GTPase superfamily. Classic translation factor GTPase family. EF-Tu/EF-1A subfamily.

The protein localises to the cytoplasm. Its function is as follows. This protein promotes the GTP-dependent binding of aminoacyl-tRNA to the A-site of ribosomes during protein biosynthesis. The polypeptide is Elongation factor 1-alpha (TEF-3) (Mucor circinelloides f. lusitanicus (Mucor racemosus var. lusitanicus)).